Here is a 1299-residue protein sequence, read N- to C-terminus: DNA-directed RNA polymerase subunit beta' (1299 aa).

Residues cysteine 60, cysteine 62, cysteine 75, and cysteine 78 each coordinate Zn(2+). Aspartate 535, aspartate 537, and aspartate 539 together coordinate Mg(2+). Residues cysteine 877, cysteine 954, cysteine 961, and cysteine 964 each contribute to the Zn(2+) site.

Belongs to the RNA polymerase beta' chain family. In terms of assembly, the RNAP catalytic core consists of 2 alpha, 1 beta, 1 beta' and 1 omega subunit. When a sigma factor is associated with the core the holoenzyme is formed, which can initiate transcription. Mg(2+) serves as cofactor. Requires Zn(2+) as cofactor.

It carries out the reaction RNA(n) + a ribonucleoside 5'-triphosphate = RNA(n+1) + diphosphate. Functionally, DNA-dependent RNA polymerase catalyzes the transcription of DNA into RNA using the four ribonucleoside triphosphates as substrates. This is DNA-directed RNA polymerase subunit beta' from Renibacterium salmoninarum (strain ATCC 33209 / DSM 20767 / JCM 11484 / NBRC 15589 / NCIMB 2235).